The following is a 644-amino-acid chain: DNA gyrase subunit B (644 aa).

The Toprim domain maps to 429-543; that stretch reads CEIFLVEGDS…AGYVYIAQPP (115 aa). Glutamate 435, aspartate 508, and aspartate 510 together coordinate Mg(2+).

The protein belongs to the type II topoisomerase GyrB family. As to quaternary structure, heterotetramer, composed of two GyrA and two GyrB chains. In the heterotetramer, GyrA contains the active site tyrosine that forms a transient covalent intermediate with DNA, while GyrB binds cofactors and catalyzes ATP hydrolysis. Requires Mg(2+) as cofactor. Mn(2+) is required as a cofactor. Ca(2+) serves as cofactor.

It is found in the cytoplasm. The enzyme catalyses ATP-dependent breakage, passage and rejoining of double-stranded DNA.. A type II topoisomerase that negatively supercoils closed circular double-stranded (ds) DNA in an ATP-dependent manner to modulate DNA topology and maintain chromosomes in an underwound state. Negative supercoiling favors strand separation, and DNA replication, transcription, recombination and repair, all of which involve strand separation. Also able to catalyze the interconversion of other topological isomers of dsDNA rings, including catenanes and knotted rings. Type II topoisomerases break and join 2 DNA strands simultaneously in an ATP-dependent manner. In Staphylococcus aureus (strain Mu50 / ATCC 700699), this protein is DNA gyrase subunit B.